The primary structure comprises 367 residues: UDP-N-acetylglucosamine--N-acetylmuramyl-(pentapeptide) pyrophosphoryl-undecaprenol N-acetylglucosamine transferase (367 aa).

UDP-N-acetyl-alpha-D-glucosamine contacts are provided by residues 15–17 (TGG), N127, R163, S191, I249, and Q294.

The protein belongs to the glycosyltransferase 28 family. MurG subfamily.

It is found in the cell inner membrane. It carries out the reaction di-trans,octa-cis-undecaprenyl diphospho-N-acetyl-alpha-D-muramoyl-L-alanyl-D-glutamyl-meso-2,6-diaminopimeloyl-D-alanyl-D-alanine + UDP-N-acetyl-alpha-D-glucosamine = di-trans,octa-cis-undecaprenyl diphospho-[N-acetyl-alpha-D-glucosaminyl-(1-&gt;4)]-N-acetyl-alpha-D-muramoyl-L-alanyl-D-glutamyl-meso-2,6-diaminopimeloyl-D-alanyl-D-alanine + UDP + H(+). Its pathway is cell wall biogenesis; peptidoglycan biosynthesis. Cell wall formation. Catalyzes the transfer of a GlcNAc subunit on undecaprenyl-pyrophosphoryl-MurNAc-pentapeptide (lipid intermediate I) to form undecaprenyl-pyrophosphoryl-MurNAc-(pentapeptide)GlcNAc (lipid intermediate II). This Burkholderia pseudomallei (strain 668) protein is UDP-N-acetylglucosamine--N-acetylmuramyl-(pentapeptide) pyrophosphoryl-undecaprenol N-acetylglucosamine transferase.